Consider the following 126-residue polypeptide: Protein Wnt-1 (126 aa).

A lipid anchor (O-palmitoleoyl serine; by PORCN) is attached at Ser-1. A disulfide bridge links Cys-92 with Cys-107. N-linked (GlcNAc...) asparagine glycans are attached at residues Asn-93 and Asn-123.

It belongs to the Wnt family. In terms of processing, palmitoleoylation is required for efficient binding to frizzled receptors. Palmitoleoylation is necessary for proper trafficking to cell surface. Depalmitoleoylated by NOTUM, leading to inhibit Wnt signaling pathway.

It localises to the secreted. It is found in the extracellular space. The protein resides in the extracellular matrix. Ligand for members of the frizzled family of seven transmembrane receptors. Acts in the canonical Wnt signaling pathway by promoting beta-catenin-dependent transcriptional activation. Plays an essential role in the development of the embryonic brain and central nervous system (CNS). Has a role in osteoblast function, bone development and bone homeostasis. The chain is Protein Wnt-1 (WNT-1) from Plestiodon skiltonianus (Western skink).